A 288-amino-acid polypeptide reads, in one-letter code: Proteasome assembly chaperone 1 (288 aa).

Positions 1–33 (MATFFGEVQSVFSRAVDEEEEDEDDDEEEEEDR) are disordered. The span at 17-33 (DEEEEDEDDDEEEEEDR) shows a compositional bias: acidic residues.

It belongs to the PSMG1 family. Forms a heterodimer with psmg2. Post-translationally, degraded by the proteasome upon completion of 20S proteasome maturation.

The protein localises to the cytoplasm. It is found in the endoplasmic reticulum. In terms of biological role, chaperone protein which promotes assembly of the 20S proteasome as part of a heterodimer with psmg2. This chain is Proteasome assembly chaperone 1, found in Xenopus laevis (African clawed frog).